The following is a 24-amino-acid chain: Major pollen allergen Ole e 4 (24 aa).

This sequence belongs to the glycosyl hydrolase 17 family. The N-terminus is blocked.

The protein is Major pollen allergen Ole e 4 of Olea europaea (Common olive).